Reading from the N-terminus, the 343-residue chain is 3-dehydroquinate synthase (343 aa).

Residues 61 to 66 (SGEKYK), 95 to 99 (GVISD), 119 to 120 (TT), K132, K141, and 159 to 162 (FLKT) contribute to the NAD(+) site. E174, H231, and H248 together coordinate Zn(2+).

This sequence belongs to the sugar phosphate cyclases superfamily. Dehydroquinate synthase family. NAD(+) serves as cofactor. The cofactor is Co(2+). It depends on Zn(2+) as a cofactor.

It localises to the cytoplasm. It carries out the reaction 7-phospho-2-dehydro-3-deoxy-D-arabino-heptonate = 3-dehydroquinate + phosphate. The protein operates within metabolic intermediate biosynthesis; chorismate biosynthesis; chorismate from D-erythrose 4-phosphate and phosphoenolpyruvate: step 2/7. Its function is as follows. Catalyzes the conversion of 3-deoxy-D-arabino-heptulosonate 7-phosphate (DAHP) to dehydroquinate (DHQ). The sequence is that of 3-dehydroquinate synthase from Helicobacter pylori (strain J99 / ATCC 700824) (Campylobacter pylori J99).